The chain runs to 344 residues: Probable nicotinate-nucleotide adenylyltransferase/Ap4A hydrolase (344 aa).

Residues 1–182 form a naMN adenylyltransferase region; that stretch reads MIFGGAFDPL…YIHQHNIYLK (182 aa). The ap4A hydrolase stretch occupies residues 191–344; it reads EPRMQHCLRV…LKYVRSLQKN (154 aa). The HD domain occupies 193 to 304; the sequence is RMQHCLRVGQ…IYLADKLEPM (112 aa). His196 provides a ligand contact to ADP. Fe cation contacts are provided by His196, His225, and Asp226. ADP-binding positions include 226 to 229, His255, 281 to 282, Asp299, and Arg305; these read DLAK and HT. Asp299 serves as a coordination point for Fe cation.

The protein in the N-terminal section; belongs to the NadD family. In the C-terminal section; belongs to the Ap4A hydrolase YqeK family.

It carries out the reaction nicotinate beta-D-ribonucleotide + ATP + H(+) = deamido-NAD(+) + diphosphate. The catalysed reaction is P(1),P(4)-bis(5'-adenosyl) tetraphosphate + H2O = 2 ADP + 2 H(+). Its pathway is cofactor biosynthesis; NAD(+) biosynthesis; deamido-NAD(+) from nicotinate D-ribonucleotide: step 1/1. Catalyzes the reversible adenylation of nicotinate mononucleotide (NaMN) to nicotinic acid adenine dinucleotide (NaAD). In terms of biological role, hydrolyzes diadenosine 5',5'''-P1,P4-tetraphosphate (Ap4A) to yield ADP. The chain is Probable nicotinate-nucleotide adenylyltransferase/Ap4A hydrolase from Mycoplasma pneumoniae (strain ATCC 29342 / M129 / Subtype 1) (Mycoplasmoides pneumoniae).